The sequence spans 261 residues: 6-carboxyhexanoate--CoA ligase (261 aa).

Belongs to the BioW family. As to quaternary structure, homodimer. Mg(2+) is required as a cofactor.

It catalyses the reaction heptanedioate + ATP + CoA = 6-carboxyhexanoyl-CoA + AMP + diphosphate. It functions in the pathway metabolic intermediate metabolism; pimeloyl-CoA biosynthesis; pimeloyl-CoA from pimelate: step 1/1. Its function is as follows. Catalyzes the transformation of pimelate into pimeloyl-CoA with concomitant hydrolysis of ATP to AMP. This Bacillus licheniformis (strain ATCC 14580 / DSM 13 / JCM 2505 / CCUG 7422 / NBRC 12200 / NCIMB 9375 / NCTC 10341 / NRRL NRS-1264 / Gibson 46) protein is 6-carboxyhexanoate--CoA ligase.